Reading from the N-terminus, the 230-residue chain is Thiamine-triphosphatase (230 aa).

Ala-2 carries the post-translational modification N-acetylalanine. A CYTH domain is found at 5–201 (LIEVERKFLP…AKLIVYLQRF (197 aa)). Positions 7 and 9 each coordinate Mg(2+). Positions 11, 55, 57, 65, and 125 each coordinate substrate. Residues Asp-145, Glu-157, and Glu-159 each contribute to the Mg(2+) site. Substrate is bound at residue Glu-157. Lys-193 provides a ligand contact to substrate.

Belongs to the ThTPase family. As to quaternary structure, monomer. Requires Mg(2+) as cofactor.

The protein localises to the cytoplasm. The enzyme catalyses thiamine triphosphate + H2O = thiamine diphosphate + phosphate + H(+). Its function is as follows. Hydrolase highly specific for thiamine triphosphate (ThTP). The sequence is that of Thiamine-triphosphatase (THTPA) from Macaca fascicularis (Crab-eating macaque).